A 132-amino-acid chain; its full sequence is Fatty acid-binding protein, adipocyte (132 aa).

C2 is modified (N-acetylcysteine). The residue at position 13 (S13) is a Phosphoserine. The residue at position 20 (Y20) is a Phosphotyrosine; by Tyr-kinases. Positions 22-32 (KEVGVGFATRK) match the Nuclear localization signal motif. Position 127–129 (127–129 (RVY)) interacts with a fatty acid.

This sequence belongs to the calycin superfamily. Fatty-acid binding protein (FABP) family. As to quaternary structure, monomer. Homodimer. Interacts with PPARG.

The protein localises to the cytoplasm. It is found in the nucleus. Lipid transport protein in adipocytes. Binds both long chain fatty acids and retinoic acid. Delivers long-chain fatty acids and retinoic acid to their cognate receptors in the nucleus. FABPs are important elements related to the hibernating state in mammals. The chain is Fatty acid-binding protein, adipocyte (FABP4) from Ictidomys tridecemlineatus (Thirteen-lined ground squirrel).